A 559-amino-acid polypeptide reads, in one-letter code: NAD-dependent malic enzyme 2 (559 aa).

Tyr-98 serves as the catalytic Proton donor. Arg-151 is an NAD(+) binding site. Residue Lys-169 is the Proton acceptor of the active site. A divalent metal cation contacts are provided by Glu-240, Asp-241, and Asp-264. NAD(+)-binding residues include Asp-264 and Asn-413.

This sequence belongs to the malic enzymes family. Homotetramer. It depends on Mg(2+) as a cofactor. The cofactor is Mn(2+).

The catalysed reaction is (S)-malate + NAD(+) = pyruvate + CO2 + NADH. It carries out the reaction oxaloacetate + H(+) = pyruvate + CO2. The sequence is that of NAD-dependent malic enzyme 2 from Vibrio vulnificus (strain YJ016).